The sequence spans 136 residues: ATP synthase F(0) complex subunit C1, mitochondrial (136 aa).

A mitochondrion-targeting transit peptide spans 1 to 61; that stretch reads MQTTKALLIS…REFQTSVISR (61 aa). Residues 77 to 97 form a helical membrane-spanning segment; sequence VGVAGSGAGIGTVFGSLIIGY. Residue Lys104 is modified to N6,N6,N6-trimethyllysine. A helical transmembrane segment spans residues 112 to 132; the sequence is ILGFALSEAMGLFCLMVAFLI.

It belongs to the ATPase C chain family. Homooctamer; the c-ring consists of eight c subunits forming a circle, and each subunit adopts a hairpin shape. Component of the ATP synthase complex composed at least of ATP5F1A/subunit alpha, ATP5F1B/subunit beta, ATP5MC1/subunit c (homooctomer), MT-ATP6/subunit a, MT-ATP8/subunit 8, ATP5ME/subunit e, ATP5MF/subunit f, ATP5MG/subunit g, ATP5MK/subunit k, ATP5MJ/subunit j, ATP5F1C/subunit gamma, ATP5F1D/subunit delta, ATP5F1E/subunit epsilon, ATP5PF/subunit F6, ATP5PB/subunit b, ATP5PD/subunit d, ATP5PO/subunit OSCP. ATP synthase complex consists of a soluble F(1) head domain (subunits alpha(3) and beta(3)) - the catalytic core - and a membrane F(0) domain - the membrane proton channel (subunits c, a, 8, e, f, g, k and j). These two domains are linked by a central stalk (subunits gamma, delta, and epsilon) rotating inside the F1 region and a stationary peripheral stalk (subunits F6, b, d, and OSCP). Interacts with TMEM70 (homooligomer form); this interaction facilitates the oligomer formation of subunit c/ATP5MC1 (c-ring) and the c-ring membrane insertion and also protects ATP5MC1 against intramitochondrial proteolysis. Trimethylated by ATPSCKMT at Lys-104. Methylation is required for proper incorporation of the C subunit into the ATP synthase complex and mitochondrial respiration.

It localises to the mitochondrion membrane. It catalyses the reaction H(+)(in) = H(+)(out). Subunit c, of the mitochondrial membrane ATP synthase complex (F(1)F(0) ATP synthase or Complex V) that produces ATP from ADP in the presence of a proton gradient across the membrane which is generated by electron transport complexes of the respiratory chain. ATP synthase complex consist of a soluble F(1) head domain - the catalytic core - and a membrane F(1) domain - the membrane proton channel. These two domains are linked by a central stalk rotating inside the F(1) region and a stationary peripheral stalk. During catalysis, ATP synthesis in the catalytic domain of F(1) is coupled via a rotary mechanism of the central stalk subunits to proton translocation. With the subunit a (MT-ATP6), forms the proton-conducting channel in the F(0) domain, that contains two crucial half-channels (inlet and outlet) that facilitate proton movement from the mitochondrial intermembrane space (IMS) into the matrix. Protons are taken up via the inlet half-channel and released through the outlet half-channel, following a Grotthuss mechanism. The protein is ATP synthase F(0) complex subunit C1, mitochondrial of Rattus norvegicus (Rat).